Reading from the N-terminus, the 426-residue chain is Tol-Pal system protein TolB (426 aa).

A signal peptide spans 1–25 (MSITPSLSRRTVMSLLAAGLSPAFA).

The protein belongs to the TolB family. The Tol-Pal system is composed of five core proteins: the inner membrane proteins TolA, TolQ and TolR, the periplasmic protein TolB and the outer membrane protein Pal. They form a network linking the inner and outer membranes and the peptidoglycan layer.

Its subcellular location is the periplasm. In terms of biological role, part of the Tol-Pal system, which plays a role in outer membrane invagination during cell division and is important for maintaining outer membrane integrity. The polypeptide is Tol-Pal system protein TolB (Polaromonas sp. (strain JS666 / ATCC BAA-500)).